The primary structure comprises 189 residues: Insecticyanin-A (189 aa).

2 disulfides stabilise this stretch: Cys-9/Cys-119 and Cys-43/Cys-175.

The protein belongs to the calycin superfamily. Lipocalin family. As to quaternary structure, homotetramer. As to expression, synthesized only in the caterpillars, apparently by the epidermis and secreted into the hemolymph. The protein is passed over from the larval hemolymph to that of pupae and adults and is sequestered in the eggs.

Its subcellular location is the secreted. Functionally, this protein binds a chromophore: biliverdin IX, isomer gamma. Mixed with lipoprotein-bound carotenes, this blue protein provides hornworms with their green cryptic coloration which serves a camouflage. The sequence is that of Insecticyanin-A (INSA) from Manduca sexta (Tobacco hawkmoth).